A 124-amino-acid chain; its full sequence is Mini zinc finger protein 4 (124 aa).

The ZF-HD dimerization-type; degenerate zinc finger occupies 35-84 (YGECRRNHAARMGGHAVDGCREFLAEGEEGTGGALRCAACGCHRSFHRRV).

In terms of assembly, homo- and heterodimers.

The protein localises to the cytoplasm. Inhibits zinc finger homeodomain (ZHD) transcription factors, by interacting with them to prevent both their nuclear localization and their DNA-binding properties. This Oryza sativa subsp. japonica (Rice) protein is Mini zinc finger protein 4 (MIF4).